A 328-amino-acid chain; its full sequence is Biotin synthase (328 aa).

In terms of domain architecture, Radical SAM core spans 53-282 (FHGNRVDLCA…ATTIRYAGGR (230 aa)). Residues cysteine 71, cysteine 75, and cysteine 78 each coordinate [4Fe-4S] cluster. [2Fe-2S] cluster contacts are provided by serine 115, cysteine 147, cysteine 207, and arginine 277.

Belongs to the radical SAM superfamily. Biotin synthase family. Homodimer. It depends on [4Fe-4S] cluster as a cofactor. Requires [2Fe-2S] cluster as cofactor.

It catalyses the reaction (4R,5S)-dethiobiotin + (sulfur carrier)-SH + 2 reduced [2Fe-2S]-[ferredoxin] + 2 S-adenosyl-L-methionine = (sulfur carrier)-H + biotin + 2 5'-deoxyadenosine + 2 L-methionine + 2 oxidized [2Fe-2S]-[ferredoxin]. It functions in the pathway cofactor biosynthesis; biotin biosynthesis; biotin from 7,8-diaminononanoate: step 2/2. Catalyzes the conversion of dethiobiotin (DTB) to biotin by the insertion of a sulfur atom into dethiobiotin via a radical-based mechanism. The polypeptide is Biotin synthase (Desulforudis audaxviator (strain MP104C)).